Here is a 558-residue protein sequence, read N- to C-terminus: C4b-binding protein alpha chain (558 aa).

The signal sequence occupies residues 1 to 13 (MSLTAALWVAVFG). 8 Sushi domains span residues 14–74 (KCGP…ACVK), 75–136 (KSCR…ECVI), 137–201 (AKCG…TCER), 202–260 (IICP…VCEL), 261–326 (NSCT…GCKE), 327–388 (ICCP…SCHQ), 389–445 (SCDF…QCKA), and 446–503 (LCRK…RCEQ). 16 disulfides stabilise this stretch: Cys15–Cys60, Cys45–Cys72, Cys77–Cys118, Cys104–Cys134, Cys139–Cys182, Cys168–Cys199, Cys204–Cys246, Cys232–Cys258, Cys263–Cys312, Cys296–Cys324, Cys329–Cys373, Cys363–Cys386, Cys390–Cys431, Cys417–Cys443, Cys447–Cys488, and Cys474–Cys501. An N-linked (GlcNAc...) asparagine glycan is attached at Asn31. Asn177 and Asn186 each carry an N-linked (GlcNAc...) asparagine glycan. N-linked (GlcNAc...) asparagine glycans are attached at residues Asn469 and Asn491.

As to quaternary structure, disulfide-linked complex of alpha and beta chains.

It is found in the secreted. Its function is as follows. Controls the classical pathway of complement activation. It binds as a cofactor to C3b/C4b inactivator (C3bINA), which then hydrolyzes the complement fragment C4b. It also accelerates the degradation of the C4bC2a complex (C3 convertase) by dissociating the complement fragment C2a. Alpha chain binds C4b. It also interacts with anticoagulant protein S and with serum amyloid P component. In Rattus norvegicus (Rat), this protein is C4b-binding protein alpha chain (C4bpa).